Reading from the N-terminus, the 175-residue chain is Translation initiation factor IF-3 (175 aa).

This sequence belongs to the IF-3 family. As to quaternary structure, monomer.

Its subcellular location is the cytoplasm. IF-3 binds to the 30S ribosomal subunit and shifts the equilibrium between 70S ribosomes and their 50S and 30S subunits in favor of the free subunits, thus enhancing the availability of 30S subunits on which protein synthesis initiation begins. The chain is Translation initiation factor IF-3 from Staphylococcus aureus (strain USA300).